Reading from the N-terminus, the 296-residue chain is Beta-lactamase (296 aa).

An N-terminal signal peptide occupies residues Met1–Ala21. Ser66 functions as the Acyl-ester intermediate in the catalytic mechanism. Position 235-237 (Lys235–Gly237) interacts with substrate.

This sequence belongs to the class-A beta-lactamase family.

It carries out the reaction a beta-lactam + H2O = a substituted beta-amino acid. The protein is Beta-lactamase (cblA) of Bacteroides uniformis.